The chain runs to 338 residues: GTPase Obg (338 aa).

The 159-residue stretch at Met-1–Ile-159 folds into the Obg domain. The OBG-type G domain maps to Ala-160–Lys-333. GTP-binding positions include Gly-166–Ser-173, Phe-191–Lys-195, Asp-213–Gly-216, Asn-283–Asp-286, and Ser-314–Ile-316. The Mg(2+) site is built by Ser-173 and Thr-193.

It belongs to the TRAFAC class OBG-HflX-like GTPase superfamily. OBG GTPase family. As to quaternary structure, monomer. The cofactor is Mg(2+).

The protein resides in the cytoplasm. In terms of biological role, an essential GTPase which binds GTP, GDP and possibly (p)ppGpp with moderate affinity, with high nucleotide exchange rates and a fairly low GTP hydrolysis rate. Plays a role in control of the cell cycle, stress response, ribosome biogenesis and in those bacteria that undergo differentiation, in morphogenesis control. This Buchnera aphidicola subsp. Baizongia pistaciae (strain Bp) protein is GTPase Obg.